The chain runs to 501 residues: Ammonium transporter 2 member 2 (501 aa).

Helical transmembrane passes span 35-55 (VAAT…YGSI), 64-84 (SAFM…LVGF), 140-160 (LVLF…GSLL), 174-194 (LWLL…GFLY), 203-223 (GGYV…YWVG), 238-258 (ILLM…FNGG), 274-294 (TNVS…IFFG), 298-318 (VIGA…GAGL), 322-342 (WSAM…MMIL), 356-376 (LAVF…TGLL), and 412-432 (FVTV…GLFI).

This sequence belongs to the ammonia transporter channel (TC 1.A.11.2) family.

Its subcellular location is the membrane. Its function is as follows. Involved in ammonium transport. The protein is Ammonium transporter 2 member 2 (AMT2-2) of Oryza sativa subsp. japonica (Rice).